Reading from the N-terminus, the 915-residue chain is Metabotropic glutamate receptor 7 (915 aa).

Residues 1 to 34 form the signal peptide; that stretch reads MVQLGKLLRVLTLMKFPCCVLEVLLCVLAAAARG. Over 35–590 the chain is Extracellular; it reads QEMYAPHSIR…IIKLEWHSPW (556 aa). An intrachain disulfide couples C67 to C109. A glycan (N-linked (GlcNAc...) asparagine) is linked at N98. Residues S159, 180 to 182, Y230, and D314 contribute to the L-glutamate site; that span reads AST. 7 cysteine pairs are disulfide-bonded: C249–C541, C374–C390, C430–C437, C523–C542, C527–C545, C548–C560, and C563–C576. Position 407 (K407) interacts with L-glutamate. 2 N-linked (GlcNAc...) asparagine glycosylation sites follow: N458 and N486. N-linked (GlcNAc...) asparagine glycosylation is present at N572. A helical membrane pass occupies residues 591 to 615; it reads AVIPVFLAMLGIIATIFVMATFIRY. Residues 616–627 lie on the Cytoplasmic side of the membrane; that stretch reads NDTPIVRASGRE. The chain crosses the membrane as a helical span at residues 628–648; that stretch reads LSYVLLTGIFLCYIITFLMIA. The Extracellular segment spans residues 649 to 654; the sequence is KPDVAV. A helical transmembrane segment spans residues 655 to 675; the sequence is CSFRRVFLGLGMCISYAALLT. Over 676-702 the chain is Cytoplasmic; sequence KTNRIYRIFEQGKKSVTAPRLISPTSQ. Residues 703-723 form a helical membrane-spanning segment; the sequence is LAITSSLISVQLLGVFIWFGV. Topologically, residues 724 to 753 are extracellular; that stretch reads DPPNIIIDYDEHKTMNPEQARGVLKCDITD. The chain crosses the membrane as a helical span at residues 754-775; it reads LQIICSLGYSILLMVTCTVYAI. Residues 776 to 788 are Cytoplasmic-facing; sequence KTRGVPENFNEAK. The chain crosses the membrane as a helical span at residues 789 to 810; it reads PIGFTMYTTCIVWLAFIPIFFG. Over 811 to 825 the chain is Extracellular; it reads TAQSAEKLYIQTTTL. The chain crosses the membrane as a helical span at residues 826–850; the sequence is TISMNLSASVALGMLYMPKVYIIIF. Topologically, residues 851–915 are cytoplasmic; that stretch reads HPELNVQKRK…KYVSYNNLVI (65 aa). Residues 874 to 895 form a disordered region; the sequence is SRLSHKPSDRPNGEAKTELCEN. The span at 879–892 shows a compositional bias: basic and acidic residues; that stretch reads KPSDRPNGEAKTEL. Phosphoserine is present on S900.

This sequence belongs to the G-protein coupled receptor 3 family. Homodimer. Interacts with PICK1.

Its subcellular location is the cell membrane. Functionally, G-protein coupled receptor activated by glutamate that regulates axon outgrowth through the MAPK-cAMP-PKA signaling pathway during neuronal development. Ligand binding causes a conformation change that triggers signaling via guanine nucleotide-binding proteins (G proteins) and modulates the activity of downstream effectors, such as adenylate cyclase that it inhibits. In Mus musculus (Mouse), this protein is Metabotropic glutamate receptor 7 (Grm7).